A 527-amino-acid polypeptide reads, in one-letter code: Flagellar radial spoke protein 5 (527 aa).

The interval 1-22 (MSEPGEEPVAAPAGPAPDPVLN) is disordered. Positions 101-153 (RKWNELTIQAKQLEQEVAGLKGPDAEAKQAELENVKVQIADAEAAVAEVKQSF) form a coiled coil. Residues Arg-191 and Arg-366 each carry the asymmetric dimethylarginine modification.

Belongs to the aldo/keto reductase family. Post-translationally, asymmetrically dimethylated at Arg-191 and Arg-366 during flagellum resorption. Probably methylated by PRMT1.

The protein localises to the cytoplasm. Its subcellular location is the cytoskeleton. The protein resides in the flagellum axoneme. Its function is as follows. Flagellar radial spokes contribute to the regulation of dynein arm activity and thus the pattern of flagellar bending. They consist of a thin stalk, which is attached to the a subfiber of the outer doublet microtubule, and a bulbous head, which is attached to the stalk and appears to interact with the projections from the central pair of microtubules. The protein is Flagellar radial spoke protein 5 of Chlamydomonas reinhardtii (Chlamydomonas smithii).